Here is a 546-residue protein sequence, read N- to C-terminus: MTKYIFVTGGVVSSVGKGIGVASIGRLLKSRGLSVSVMKLDPYLNVDPGTMSPYQHGEVFVTADGAETDLDLGHYERFIDVNLSRLSNVTTGQIYSAVIAKERRGDYLGGTIQVIPHITNEIKSRIGSLARSSQADVVIVEIGGTVGDIESLPFLEAIRQMRKDVGRDNILYIHVTLLPHISTGELKTKPTQHSVMALRNVGISADIILCRADRPIDDEIREKIAFFADVDVRAVIPVPTVDSIYEVPLVLEDMGLGDYLVERLGLPATPPDLEEWRALVARIRQEKRRVPIALVGKYVELHDAYISVVEALHHAGLEQSIDIDIRWIAAEEVEREGPARLLSGVYGILVPGGFGERGIEGKIAAADYARIHGIPYLGLCLGMQCATIAFARHVLGTHDVNSTEFNPQTAHPVIDLMPDQRDITEKGGTMRLGLYPCDLVPGTRAHAAYGCDRVEERHRHRFEFNNRYRSVLEAAGLVISGISPDKRLVEIIELRDHPWYVASQFHPEFQSRPGKPHPLFRGFVAAAAQTLLAGEARQLPLVESTS.

The tract at residues 1 to 266 (MTKYIFVTGG…GDYLVERLGL (266 aa)) is amidoligase domain. Ser-13 provides a ligand contact to CTP. A UTP-binding site is contributed by Ser-13. An ATP-binding site is contributed by 14-19 (SVGKGI). Tyr-54 contacts L-glutamine. Asp-71 contacts ATP. Positions 71 and 141 each coordinate Mg(2+). CTP is bound by residues 148–150 (DIE), 187–192 (KTKPTQ), and Lys-223. Residues 187-192 (KTKPTQ) and Lys-223 each bind UTP. The Glutamine amidotransferase type-1 domain occupies 291-533 (PIALVGKYVE…VAAAAQTLLA (243 aa)). Gly-353 is a binding site for L-glutamine. Cys-380 acts as the Nucleophile; for glutamine hydrolysis in catalysis. Residues 381–384 (LGMQ), Glu-404, and Arg-461 contribute to the L-glutamine site. Residues His-506 and Glu-508 contribute to the active site.

Belongs to the CTP synthase family. In terms of assembly, homotetramer.

It catalyses the reaction UTP + L-glutamine + ATP + H2O = CTP + L-glutamate + ADP + phosphate + 2 H(+). It carries out the reaction L-glutamine + H2O = L-glutamate + NH4(+). The enzyme catalyses UTP + NH4(+) + ATP = CTP + ADP + phosphate + 2 H(+). It participates in pyrimidine metabolism; CTP biosynthesis via de novo pathway; CTP from UDP: step 2/2. Its activity is regulated as follows. Allosterically activated by GTP, when glutamine is the substrate; GTP has no effect on the reaction when ammonia is the substrate. The allosteric effector GTP functions by stabilizing the protein conformation that binds the tetrahedral intermediate(s) formed during glutamine hydrolysis. Inhibited by the product CTP, via allosteric rather than competitive inhibition. Catalyzes the ATP-dependent amination of UTP to CTP with either L-glutamine or ammonia as the source of nitrogen. Regulates intracellular CTP levels through interactions with the four ribonucleotide triphosphates. This is CTP synthase from Chloroflexus aurantiacus (strain ATCC 29366 / DSM 635 / J-10-fl).